A 178-amino-acid polypeptide reads, in one-letter code: FXYD domain-containing ion transport regulator 5 (178 aa).

Residues methionine 1–glycine 21 form the signal peptide. The tract at residues glycine 21–proline 126 is disordered. Residues glutamine 22–glycine 146 lie on the Extracellular side of the membrane. Positions serine 29 to isoleucine 58 are enriched in polar residues. The segment covering glutamine 70 to glutamine 79 has biased composition (low complexity). A helical membrane pass occupies residues leucine 147–glycine 164. Residues lysine 165 to arginine 178 lie on the Cytoplasmic side of the membrane.

It belongs to the FXYD family. Regulatory subunit of the sodium/potassium-transporting ATPase which is composed of a catalytic alpha subunit, a non-catalytic beta subunit and an additional regulatory subunit. The regulatory subunit, a member of the FXYD protein family, modulates the enzymatic activity in a tissue- and isoform-specific way by changing affinities of the Na+/K+-ATPase toward Na(+), K(+) or ATP. Glycosylated. In terms of tissue distribution, spleen, lung, skeletal muscle, and testis.

It is found in the cell membrane. The protein localises to the basolateral cell membrane. In terms of biological role, associates with and regulates the activity of the sodium/potassium-transporting ATPase (NKA) which catalyzes the hydrolysis of ATP coupled with the exchange of Na(+) and K(+) ions across the plasma membrane. May increase NKA activity by increasing the apparent affinity for Na(+). Involved in down-regulation of E-cadherin which results in reduced cell adhesion. Promotes metastasis. The protein is FXYD domain-containing ion transport regulator 5 (Fxyd5) of Rattus norvegicus (Rat).